Reading from the N-terminus, the 563-residue chain is Eukaryotic translation initiation factor 3 subunit D-1 (563 aa).

The disordered stretch occupies residues Val98–Ser167. A compositionally biased stretch (basic residues) spans Lys100 to Asn121. Thr128 carries the phosphothreonine modification. The RNA gate stretch occupies residues Glu291–Pro305.

The protein belongs to the eIF-3 subunit D family. In terms of assembly, component of the eukaryotic translation initiation factor 3 (eIF-3) complex. The eIF-3 complex interacts with pix.

The protein localises to the cytoplasm. MRNA cap-binding component of the eukaryotic translation initiation factor 3 (eIF-3) complex, which is involved in protein synthesis of a specialized repertoire of mRNAs and, together with other initiation factors, stimulates binding of mRNA and methionyl-tRNAi to the 40S ribosome. The eIF-3 complex specifically targets and initiates translation of a subset of mRNAs involved in cell proliferation. In the eIF-3 complex, eif3d specifically recognizes and binds the 7-methylguanosine cap of a subset of mRNAs. In Drosophila grimshawi (Hawaiian fruit fly), this protein is Eukaryotic translation initiation factor 3 subunit D-1.